The chain runs to 29 residues: Dermaseptin-S5 (29 aa).

The protein belongs to the frog skin active peptide (FSAP) family. Dermaseptin subfamily. As to expression, expressed by the skin glands.

It is found in the secreted. Its function is as follows. Potent antimicrobial peptide with activity against bacteria and protozoa. Also has activity against fungi. Probably acts by disturbing membrane functions with its amphipathic structure. This is Dermaseptin-S5 from Phyllomedusa sauvagei (Sauvage's leaf frog).